Consider the following 346-residue polypeptide: Phosphate acyltransferase (346 aa).

This sequence belongs to the PlsX family. Homodimer. Probably interacts with PlsY.

The protein localises to the cytoplasm. It catalyses the reaction a fatty acyl-[ACP] + phosphate = an acyl phosphate + holo-[ACP]. The protein operates within lipid metabolism; phospholipid metabolism. Its function is as follows. Catalyzes the reversible formation of acyl-phosphate (acyl-PO(4)) from acyl-[acyl-carrier-protein] (acyl-ACP). This enzyme utilizes acyl-ACP as fatty acyl donor, but not acyl-CoA. This chain is Phosphate acyltransferase, found in Geotalea uraniireducens (strain Rf4) (Geobacter uraniireducens).